A 386-amino-acid chain; its full sequence is Succinate--CoA ligase [ADP-forming] subunit beta (386 aa).

One can recognise an ATP-grasp domain in the interval 9 to 244; that stretch reads KEIFRKYGVP…LAEEEPREIQ (236 aa). ATP is bound by residues Lys-46, 53–55, Glu-99, Leu-102, and Glu-107; that span reads GRG. Residues Asn-199 and Asp-213 each coordinate Mg(2+). Residues Asn-264 and 321-323 contribute to the substrate site; that span reads GIM.

The protein belongs to the succinate/malate CoA ligase beta subunit family. In terms of assembly, heterotetramer of two alpha and two beta subunits. Mg(2+) is required as a cofactor.

The enzyme catalyses succinate + ATP + CoA = succinyl-CoA + ADP + phosphate. The catalysed reaction is GTP + succinate + CoA = succinyl-CoA + GDP + phosphate. Its pathway is carbohydrate metabolism; tricarboxylic acid cycle; succinate from succinyl-CoA (ligase route): step 1/1. Its function is as follows. Succinyl-CoA synthetase functions in the citric acid cycle (TCA), coupling the hydrolysis of succinyl-CoA to the synthesis of either ATP or GTP and thus represents the only step of substrate-level phosphorylation in the TCA. The beta subunit provides nucleotide specificity of the enzyme and binds the substrate succinate, while the binding sites for coenzyme A and phosphate are found in the alpha subunit. This is Succinate--CoA ligase [ADP-forming] subunit beta from Myxococcus xanthus (strain DK1622).